The sequence spans 493 residues: Glutamyl-tRNA(Gln) amidotransferase subunit A (493 aa).

Active-site charge relay system residues include K78 and S159. The active-site Acyl-ester intermediate is S183.

The protein belongs to the amidase family. GatA subfamily. As to quaternary structure, heterotrimer of A, B and C subunits.

The enzyme catalyses L-glutamyl-tRNA(Gln) + L-glutamine + ATP + H2O = L-glutaminyl-tRNA(Gln) + L-glutamate + ADP + phosphate + H(+). Its function is as follows. Allows the formation of correctly charged Gln-tRNA(Gln) through the transamidation of misacylated Glu-tRNA(Gln) in organisms which lack glutaminyl-tRNA synthetase. The reaction takes place in the presence of glutamine and ATP through an activated gamma-phospho-Glu-tRNA(Gln). In Sphingopyxis alaskensis (strain DSM 13593 / LMG 18877 / RB2256) (Sphingomonas alaskensis), this protein is Glutamyl-tRNA(Gln) amidotransferase subunit A.